The chain runs to 180 residues: ATP-dependent protease subunit HslV (180 aa).

Thr9 is an active-site residue. Na(+)-binding residues include Ala164, Cys167, and Thr170.

Belongs to the peptidase T1B family. HslV subfamily. As to quaternary structure, a double ring-shaped homohexamer of HslV is capped on each side by a ring-shaped HslU homohexamer. The assembly of the HslU/HslV complex is dependent on binding of ATP.

It localises to the cytoplasm. The catalysed reaction is ATP-dependent cleavage of peptide bonds with broad specificity.. Its activity is regulated as follows. Allosterically activated by HslU binding. Protease subunit of a proteasome-like degradation complex believed to be a general protein degrading machinery. The protein is ATP-dependent protease subunit HslV of Leptospira interrogans serogroup Icterohaemorrhagiae serovar Lai (strain 56601).